The chain runs to 269 residues: 4-hydroxy-tetrahydrodipicolinate reductase (269 aa).

Residues 8–13 (GVAGRM), 98–100 (GTT), and 122–125 (APNM) each bind NAD(+). The active-site Proton donor/acceptor is histidine 156. Histidine 157 contributes to the (S)-2,3,4,5-tetrahydrodipicolinate binding site. Catalysis depends on lysine 160, which acts as the Proton donor. Residue 166–167 (GT) participates in (S)-2,3,4,5-tetrahydrodipicolinate binding.

The protein belongs to the DapB family.

Its subcellular location is the cytoplasm. It catalyses the reaction (S)-2,3,4,5-tetrahydrodipicolinate + NAD(+) + H2O = (2S,4S)-4-hydroxy-2,3,4,5-tetrahydrodipicolinate + NADH + H(+). It carries out the reaction (S)-2,3,4,5-tetrahydrodipicolinate + NADP(+) + H2O = (2S,4S)-4-hydroxy-2,3,4,5-tetrahydrodipicolinate + NADPH + H(+). Its pathway is amino-acid biosynthesis; L-lysine biosynthesis via DAP pathway; (S)-tetrahydrodipicolinate from L-aspartate: step 4/4. Its function is as follows. Catalyzes the conversion of 4-hydroxy-tetrahydrodipicolinate (HTPA) to tetrahydrodipicolinate. The protein is 4-hydroxy-tetrahydrodipicolinate reductase of Chromohalobacter salexigens (strain ATCC BAA-138 / DSM 3043 / CIP 106854 / NCIMB 13768 / 1H11).